Consider the following 344-residue polypeptide: tRNA(Ile)-lysidine synthase (344 aa).

30 to 35 (SGGQDS) contacts ATP. The segment at 323 to 344 (PPPPAPVPPDPGERSPPPSPLY) is disordered.

It belongs to the tRNA(Ile)-lysidine synthase family.

The protein localises to the cytoplasm. The enzyme catalyses cytidine(34) in tRNA(Ile2) + L-lysine + ATP = lysidine(34) in tRNA(Ile2) + AMP + diphosphate + H(+). Functionally, ligates lysine onto the cytidine present at position 34 of the AUA codon-specific tRNA(Ile) that contains the anticodon CAU, in an ATP-dependent manner. Cytidine is converted to lysidine, thus changing the amino acid specificity of the tRNA from methionine to isoleucine. This Thermosynechococcus vestitus (strain NIES-2133 / IAM M-273 / BP-1) protein is tRNA(Ile)-lysidine synthase.